The chain runs to 38 residues: DNA binding protein VP8 (38 aa).

Positions 1-16 are enriched in basic residues; the sequence is MKRKPMSRKASQKTFK. Residues 1–38 are disordered; the sequence is MKRKPMSRKASQKTFKKNTGVQRMNHLNPRAMRGGIRL.

It belongs to the microviridae J protein family.

It localises to the virion. The protein resides in the host cytoplasm. Mediates ssDNA packaging into virion, it locates to the internal surface of the capsid, thereby displacing the internal scaffolding protein VP3 during virion formation. Additionally, protein VP8 plays a role in viral attachment to the host cell. In Bdellovibrio phage phiMH2K (Bacteriophage phiMH2K), this protein is DNA binding protein VP8.